A 459-amino-acid polypeptide reads, in one-letter code: Friend virus susceptibility protein 1 (459 aa).

Positions 192–269 (EAELPTVLAS…LNSLAHSNRQ (78 aa)) are disordered. Basic and acidic residues predominate over residues 213–223 (SKERTQQDKAD). Residues 226-238 (QIQSSTSLVTSEP) are compositionally biased toward polar residues.

Retroviral restriction factor that prevents infection by gammaretroviruses. Acts by interacting with the capsid protein ca after entry of the virus into the cell. This interaction presumably disrupt the capsid thereby inactivating the viral genome, making it unable to enter host nucleus and integrate into host genome. The polypeptide is Friend virus susceptibility protein 1 (Fv1) (Mus musculus (Mouse)).